Reading from the N-terminus, the 1320-residue chain is Clustered mitochondria protein homolog (1320 aa).

Disordered stretches follow at residues 166 to 241, 552 to 582, and 683 to 708; these read QQLE…KQKM, YGSM…TKSI, and LKEK…EDVQ. The span at 185–194 shows a compositional bias: basic and acidic residues; it reads TEDKEEKETI. The segment covering 202–213 has biased composition (basic residues); the sequence is KKNKHHNKKGNK. Composition is skewed to basic and acidic residues over residues 226 to 241, 565 to 575, and 683 to 695; these read NEEK…KQKM, QQQKEENEENK, and LKEK…KEGI. A Clu domain is found at 379–649; it reads KTNRYDINKG…KATPRDPNYT (271 aa). TPR repeat units follow at residues 955–988, 997–1030, 1039–1072, 1081–1114, and 1123–1156; these read GLDL…YHQV, GACF…TEKT, VQAY…TDLL, ASIY…QEFL, and STTY…LEKE. Positions 1204–1320 are disordered; the sequence is KADQFKKSQP…SKPNKKSSKN (117 aa). The segment covering 1237–1247 has biased composition (basic residues); the sequence is KPKKSQSKKSK. Residues 1248–1311 are compositionally biased toward low complexity; the sequence is STNTTTTTNT…PTSSSAADSS (64 aa).

This sequence belongs to the CLU family.

It localises to the cytoplasm. Its function is as follows. mRNA-binding protein involved in proper cytoplasmic distribution of mitochondria. This is Clustered mitochondria protein homolog from Dictyostelium discoideum (Social amoeba).